A 114-amino-acid chain; its full sequence is Large ribosomal subunit protein bL19 (114 aa).

It belongs to the bacterial ribosomal protein bL19 family.

Its function is as follows. This protein is located at the 30S-50S ribosomal subunit interface and may play a role in the structure and function of the aminoacyl-tRNA binding site. The protein is Large ribosomal subunit protein bL19 of Heliobacterium modesticaldum (strain ATCC 51547 / Ice1).